A 632-amino-acid chain; its full sequence is Pheromone-processing carboxypeptidase kex1 (632 aa).

The N-terminal stretch at Met1 to Ala38 is a signal peptide. The Lumenal segment spans residues Lys39–Lys523. 2 N-linked (GlcNAc...) asparagine glycosylation sites follow: Asn119 and Asn126. Catalysis depends on residues Ser190 and Asp390. N-linked (GlcNAc...) asparagine glycans are attached at residues Asn441 and Asn449. The active site involves His452. The disordered stretch occupies residues Lys480 to Gln507. A compositionally biased stretch (polar residues) spans Pro492–Glu506. N-linked (GlcNAc...) asparagine glycosylation is present at Asn501. A helical transmembrane segment spans residues Ser524–Trp544. At Arg545–Pro632 the chain is on the cytoplasmic side. A disordered region spans residues Glu568–Pro632. Positions Glu581–Leu590 are enriched in acidic residues.

This sequence belongs to the peptidase S10 family.

Its subcellular location is the golgi apparatus. It localises to the trans-Golgi network membrane. The enzyme catalyses Preferential release of a C-terminal arginine or lysine residue.. Protease with a carboxypeptidase B-like function involved in the C-terminal processing of the lysine and arginine residues from protein precursors. Promotes cell fusion and is involved in the programmed cell death. The polypeptide is Pheromone-processing carboxypeptidase kex1 (kex1) (Neosartorya fischeri (strain ATCC 1020 / DSM 3700 / CBS 544.65 / FGSC A1164 / JCM 1740 / NRRL 181 / WB 181) (Aspergillus fischerianus)).